Consider the following 304-residue polypeptide: Thymidylate synthase (304 aa).

Residues arginine 30 and 157–158 (RR) contribute to the dUMP site. Cysteine 177 (nucleophile) is an active-site residue. Residues 206 to 209 (RSCD), asparagine 217, and 247 to 249 (HVY) contribute to the dUMP site. Residue aspartate 209 participates in (6R)-5,10-methylene-5,6,7,8-tetrahydrofolate binding.

Belongs to the thymidylate synthase family. In terms of assembly, homodimer.

It localises to the nucleus. The enzyme catalyses dUMP + (6R)-5,10-methylene-5,6,7,8-tetrahydrofolate = 7,8-dihydrofolate + dTMP. Its pathway is pyrimidine metabolism; dTTP biosynthesis. Inhibited by 5-fluoro-2'-deoxyuridine 5'-monophosphate (FdUMP). In terms of biological role, thymidylate synthase required for de novo biosynthesis of pyrimidine deoxyribonucleotides. Required for both nuclear and mitochondrial DNA synthesis. This Saccharomyces cerevisiae (strain ATCC 204508 / S288c) (Baker's yeast) protein is Thymidylate synthase (CDC21).